A 281-amino-acid polypeptide reads, in one-letter code: Merozoite surface protein 2 (281 aa).

Positions 1 to 20 are cleaved as a signal peptide; it reads MKVIKTLSIINFFIFVTFNI. 2 N-linked (GlcNAc...) asparagine glycosylation sites follow: asparagine 22 and asparagine 36. Positions 42-242 are disordered; that stretch reads SMEESNPPTG…DSQKECTDGN (201 aa). Residues 44 to 207 are polymorphic region; the sequence is EESNPPTGAS…EQTESPELQS (164 aa). 3 tandem repeats follow at residues 51-58, 59-66, and 67-74. Residues 51 to 74 form a 3 X 8 AA tandem repeats of G-A-S-G-R-A-G-A region; it reads GASGRAGAGASGRAGAGASGRAGA. A compositionally biased stretch (gly residues) spans 54 to 76; that stretch reads GRAGAGASGRAGAGASGRAGAGA. Low complexity predominate over residues 77–133; it reads GAVASAGSGDGAVASAGNGANPGADAKRSTSTPATTTTTTTTNDAEASTSTSSENPN. Polar residues-rich tracts occupy residues 150-174 and 181-209; these read NKANTETQNNSNVQQDSQTKSNVPP and KSPTAQPEQAENSAPTAEQTESPELQSAP. Asparagine 158 carries N-linked (GlcNAc...) asparagine glycosylation. N-linked (GlcNAc...) asparagine glycosylation is present at asparagine 230. Cysteine 238 and cysteine 246 form a disulfide bridge. Residues asparagine 254 and asparagine 255 are each glycosylated (N-linked (GlcNAc...) asparagine). The GPI-anchor amidated asparagine moiety is linked to residue asparagine 255. Residues 256–281 constitute a propeptide, removed in mature form; that stretch reads SSNIASINKFVVLISATLVLSFAIFI.

Its subcellular location is the cell membrane. Its function is as follows. May play a role in the merozoite attachment to the erythrocyte. This Plasmodium falciparum (isolate thtn / Thailand) protein is Merozoite surface protein 2.